Reading from the N-terminus, the 416-residue chain is MSGHRSTRKRCGDSHPESPVGFGHMSTTGCILNKLFQLPTPPLSRHQLKRLEEHRYQSAGRSLLEPLMQGYWEWLVGRVPSWIAPNLITIIGLSINICTTILLVFYCPTATEQAPLWAYIACACGLFIYQSLDAIDGKQARRTNSSSPLGELFDHGCDSLSTVFVVLGTCIAVQLGTNPDWMFFCCFAGTFMFYCAHWQTYVSGTLRFGIIDVTEVQIFIIIMHLLAVIGGPPFWQSMIPVLNIQMKLFPALCTVAGTIFSCTNYFRVIFTGGVGKNGSTIAGTSVLSPFLHIGSVITLAVMIYKKSAVQLFEKHPCLYILTFGFVSAKITNKLVVAHMTKSEMHLHDTAFIGPALLFLDQYFNSFIDEYIVLWIALVFSFFDLIRYCVSVCNQIASHLHIHVFRIKTSTAHSNHH.

Positions 1–20 are disordered; it reads MSGHRSTRKRCGDSHPESPV. Phosphoserine is present on Ser18. Residue Thr40 is modified to Phosphothreonine. Asn86 provides a ligand contact to CDP-choline. 2 consecutive transmembrane segments (helical) span residues 89–108 and 116–133; these read TIIGLSINICTTILLVFYCP and LWAYIACACGLFIYQSLD. Mg(2+) is bound at residue Asp133. N-linked (GlcNAc...) asparagine glycosylation occurs at Asn144. A CDP-choline-binding site is contributed by Glu151. Position 154 (Asp154) interacts with Mg(2+). His155 serves as the catalytic Proton acceptor. Transmembrane regions (helical) follow at residues 156–176, 180–199, 210–230, 246–267, 286–306, 315–334, 349–363, and 368–388; these read GCDSLSTVFVVLGTCIAVQLG, DWMFFCCFAGTFMFYCAHWQ, IIDVTEVQIFIIIMHLLAVIG, MKLFPALCTVAGTIFSCTNYFR, VLSPFLHIGSVITLAVMIYKK, HPCLYILTFGFVSAKITNKL, TAFIGPALLFLDQYF, and DEYIVLWIALVFSFFDLIRYC. Residue Asp158 coordinates Mg(2+).

Belongs to the CDP-alcohol phosphatidyltransferase class-I family. As to quaternary structure, homodimer. Mg(2+) serves as cofactor. Requires Mn(2+) as cofactor.

Its subcellular location is the endoplasmic reticulum membrane. The protein localises to the nucleus membrane. The catalysed reaction is CDP-ethanolamine + a 1,2-diacyl-sn-glycerol = a 1,2-diacyl-sn-glycero-3-phosphoethanolamine + CMP + H(+). The enzyme catalyses CDP-choline + a 1,2-diacyl-sn-glycerol = a 1,2-diacyl-sn-glycero-3-phosphocholine + CMP + H(+). It carries out the reaction 1-O-alkyl-2-acyl-sn-glycerol + CDP-choline = a 1-O-alkyl-2-acyl-sn-glycero-3-phosphocholine + CMP + H(+). It catalyses the reaction a 1-O-(1Z-alkenyl)-2-acyl-sn-glycerol + CDP-choline = a 1-O-(1Z-alkenyl)-2-acyl-sn-glycero-3-phosphocholine + CMP + H(+). The catalysed reaction is 1,2-dioctanoyl-sn-glycerol + CDP-choline = 1,2-dioctanoyl-sn-glycero-3-phosphocholine + CMP + H(+). The enzyme catalyses 1,2-didecanoyl-sn-glycerol + CDP-choline = 1,2-didecanoyl-sn-glycero-3-phosphocholine + CMP + H(+). It carries out the reaction CDP-choline + 1,2-di-(9Z-octadecenoyl)-sn-glycerol = 1,2-di-(9Z-octadecenoyl)-sn-glycero-3-phosphocholine + CMP + H(+). It catalyses the reaction 1-hexadecanoyl-2-(9Z-octadecenoyl)-sn-glycerol + CDP-choline = 1-hexadecanoyl-2-(9Z-octadecenoyl)-sn-glycero-3-phosphocholine + CMP + H(+). The catalysed reaction is CDP-ethanolamine + 1,2-di-(9Z-octadecenoyl)-sn-glycerol = 1,2-di-(9Z-octadecenoyl)-sn-glycero-3-phosphoethanolamine + CMP + H(+). The enzyme catalyses 1-hexadecanoyl-2-(9Z-octadecenoyl)-sn-glycerol + CDP-ethanolamine = 1-hexadecanoyl-2-(9Z-octadecenoyl)-sn-glycero-3-phosphoethanolamine + CMP + H(+). It carries out the reaction 1-hexadecanoyl-2-(4Z,7Z,10Z,13Z,16Z,19Z-docosahexaenoyl)-sn-glycerol + CDP-choline = 1-hexadecanoyl-2-(4Z,7Z,10Z,13Z,16Z,19Z-docosahexaenoyl)-sn-glycero-3-phosphocholine + CMP + H(+). It catalyses the reaction 1,2-di-(9Z-hexadecenoyl)-sn-glycerol + CDP-choline = 1,2-di-(9Z-hexadecenoyl)-sn-glycero-3-phosphocholine + CMP + H(+). The catalysed reaction is 1,2-di-(9Z-hexadecenoyl)-sn-glycerol + CDP-ethanolamine = 1,2-di-(9Z-hexadecenoyl)-sn-glycero-3-phosphoethanolamine + CMP + H(+). The enzyme catalyses 1-O-hexadecyl-2-acetyl-sn-glycerol + CDP-choline = 1-O-hexadecyl-2-acetyl-sn-glycero-3-phosphocholine + CMP + H(+). It carries out the reaction 1-O-hexadecyl-2-(5Z,8Z,11Z,14Z-eicosatetraenoyl)-sn-glycerol + CDP-choline = 1-O-hexadecyl-2-(5Z,8Z,11Z,14Z)-eicosatetraenoyl-sn-glycero-3-phosphocholine + CMP + H(+). It participates in phospholipid metabolism; phosphatidylethanolamine biosynthesis; phosphatidylethanolamine from ethanolamine: step 3/3. The protein operates within phospholipid metabolism; phosphatidylcholine biosynthesis; phosphatidylcholine from phosphocholine: step 2/2. Its function is as follows. Catalyzes both phosphatidylcholine and phosphatidylethanolamine biosynthesis from CDP-choline and CDP-ethanolamine, respectively. Involved in protein-dependent process of phospholipid transport to distribute phosphatidyl choline to the lumenal surface. Has a higher cholinephosphotransferase activity than ethanolaminephosphotransferase activity. This chain is Choline/ethanolaminephosphotransferase 1, found in Rattus norvegicus (Rat).